The chain runs to 484 residues: Malonate-semialdehyde dehydrogenase 1 (484 aa).

NAD(+)-binding residues include Phe153, Lys177, Glu180, Arg181, Ser230, and Thr252. Cys285 functions as the Nucleophile in the catalytic mechanism. Residue Glu385 coordinates NAD(+).

It belongs to the aldehyde dehydrogenase family. IolA subfamily. In terms of assembly, homotetramer.

The catalysed reaction is 3-oxopropanoate + NAD(+) + CoA + H2O = hydrogencarbonate + acetyl-CoA + NADH + H(+). It carries out the reaction 2-methyl-3-oxopropanoate + NAD(+) + CoA + H2O = propanoyl-CoA + hydrogencarbonate + NADH + H(+). Its pathway is polyol metabolism; myo-inositol degradation into acetyl-CoA; acetyl-CoA from myo-inositol: step 7/7. Its function is as follows. Catalyzes the oxidation of malonate semialdehyde (MSA) and methylmalonate semialdehyde (MMSA) into acetyl-CoA and propanoyl-CoA, respectively. Is involved in a myo-inositol catabolic pathway. Bicarbonate, and not CO2, is the end-product of the enzymatic reaction. The sequence is that of Malonate-semialdehyde dehydrogenase 1 from Geobacillus thermodenitrificans (strain NG80-2).